Consider the following 108-residue polypeptide: Integration host factor subunit alpha (108 aa).

It belongs to the bacterial histone-like protein family. In terms of assembly, heterodimer of an alpha and a beta chain.

In terms of biological role, this protein is one of the two subunits of integration host factor, a specific DNA-binding protein that functions in genetic recombination as well as in transcriptional and translational control. The polypeptide is Integration host factor subunit alpha (Methylorubrum extorquens (strain CM4 / NCIMB 13688) (Methylobacterium extorquens)).